A 773-amino-acid polypeptide reads, in one-letter code: ATP-dependent permease MDL2, mitochondrial (773 aa).

A mitochondrion-targeting transit peptide spans 1-90 (MLNGRLPLLR…SPISKGSARS (90 aa)). A compositionally biased stretch (polar residues) spans 73–84 (PETSLPSASPIS). The tract at residues 73 to 95 (PETSLPSASPISKGSARSAHAKE) is disordered. Residues 119-413 (LLTAILLLTI…LSTFYSEIMQ (295 aa)) form the ABC transmembrane type-1 domain. The next 3 membrane-spanning stretches (helical) occupy residues 123-143 (ILLL…IGIV), 170-192 (FLSF…FILL), and 257-277 (VVGV…LLFF). 481–488 (GPSGRGKS) contributes to the ATP binding site. An ABC transporter domain is found at 493–733 (LLLRYYNPTT…DDNDNNHDND (241 aa)). Composition is skewed to basic and acidic residues over residues 706-733 (KEDL…HDND) and 740-762 (ETKD…DAAK). The disordered stretch occupies residues 706 to 773 (KEDLNESKEH…ANPIKITPQP (68 aa)).

The protein belongs to the ABC transporter superfamily. ABCB family. Mitochondrial peptide exporter (TC 3.A.1.212) subfamily.

The protein resides in the mitochondrion inner membrane. This chain is ATP-dependent permease MDL2, mitochondrial (MDL2), found in Saccharomyces cerevisiae (strain ATCC 204508 / S288c) (Baker's yeast).